The chain runs to 102 residues: Protein translation factor SUI1 homolog (102 aa).

This sequence belongs to the SUI1 family.

This chain is Protein translation factor SUI1 homolog, found in Cenarchaeum symbiosum (strain A).